Reading from the N-terminus, the 235-residue chain is Probable transcriptional regulatory protein Cj1172c (235 aa).

Belongs to the TACO1 family.

The protein localises to the cytoplasm. The chain is Probable transcriptional regulatory protein Cj1172c from Campylobacter jejuni subsp. jejuni serotype O:2 (strain ATCC 700819 / NCTC 11168).